The sequence spans 108 residues: Iron-sulfur cluster assembly protein CyaY (108 aa).

Belongs to the frataxin family.

Functionally, involved in iron-sulfur (Fe-S) cluster assembly. May act as a regulator of Fe-S biogenesis. The sequence is that of Iron-sulfur cluster assembly protein CyaY from Pseudomonas aeruginosa (strain ATCC 15692 / DSM 22644 / CIP 104116 / JCM 14847 / LMG 12228 / 1C / PRS 101 / PAO1).